The following is a 488-amino-acid chain: Arginine biosynthesis bifunctional protein ArgJ, mitochondrial (488 aa).

Positions 227, 250, 261, 340, 483, and 488 each coordinate substrate. The Nucleophile role is filled by Thr261.

This sequence belongs to the ArgJ family. In terms of assembly, heterodimer of an alpha and a beta chain. The alpha and beta chains are autoproteolytically processed from a single precursor protein within the mitochondrion.

It is found in the mitochondrion matrix. It carries out the reaction N(2)-acetyl-L-ornithine + L-glutamate = N-acetyl-L-glutamate + L-ornithine. The enzyme catalyses L-glutamate + acetyl-CoA = N-acetyl-L-glutamate + CoA + H(+). The protein operates within amino-acid biosynthesis; L-arginine biosynthesis; L-ornithine and N-acetyl-L-glutamate from L-glutamate and N(2)-acetyl-L-ornithine (cyclic): step 1/1. It participates in amino-acid biosynthesis; L-arginine biosynthesis; N(2)-acetyl-L-ornithine from L-glutamate: step 1/4. In terms of biological role, catalyzes two activities which are involved in the cyclic version of arginine biosynthesis: the synthesis of acetylglutamate from glutamate and acetyl-CoA, and of ornithine by transacetylation between acetylornithine and glutamate. This chain is Arginine biosynthesis bifunctional protein ArgJ, mitochondrial, found in Thalassiosira pseudonana (Marine diatom).